We begin with the raw amino-acid sequence, 350 residues long: Phenylalanine--tRNA ligase alpha subunit (350 aa).

E262 lines the Mg(2+) pocket.

Belongs to the class-II aminoacyl-tRNA synthetase family. Phe-tRNA synthetase alpha subunit type 1 subfamily. Tetramer of two alpha and two beta subunits. Mg(2+) is required as a cofactor.

It localises to the cytoplasm. It catalyses the reaction tRNA(Phe) + L-phenylalanine + ATP = L-phenylalanyl-tRNA(Phe) + AMP + diphosphate + H(+). The chain is Phenylalanine--tRNA ligase alpha subunit (pheS) from Thermus thermophilus (strain ATCC 27634 / DSM 579 / HB8).